The following is a 175-amino-acid chain: Dual-action ribosomal maturation protein DarP (175 aa).

The protein belongs to the DarP family.

It is found in the cytoplasm. In terms of biological role, member of a network of 50S ribosomal subunit biogenesis factors which assembles along the 30S-50S interface, preventing incorrect 23S rRNA structures from forming. Promotes peptidyl transferase center (PTC) maturation. This is Dual-action ribosomal maturation protein DarP from Vibrio parahaemolyticus serotype O3:K6 (strain RIMD 2210633).